A 275-amino-acid polypeptide reads, in one-letter code: 3-methyl-2-oxobutanoate hydroxymethyltransferase (275 aa).

Residues Asp-44 and Asp-83 each coordinate Mg(2+). Residues 44–45, Asp-83, and Lys-113 contribute to the 3-methyl-2-oxobutanoate site; that span reads DS. Position 115 (Glu-115) interacts with Mg(2+). The active-site Proton acceptor is the Glu-182.

It belongs to the PanB family. Homodecamer; pentamer of dimers. Mg(2+) is required as a cofactor.

Its subcellular location is the cytoplasm. The catalysed reaction is 3-methyl-2-oxobutanoate + (6R)-5,10-methylene-5,6,7,8-tetrahydrofolate + H2O = 2-dehydropantoate + (6S)-5,6,7,8-tetrahydrofolate. The protein operates within cofactor biosynthesis; (R)-pantothenate biosynthesis; (R)-pantoate from 3-methyl-2-oxobutanoate: step 1/2. In terms of biological role, catalyzes the reversible reaction in which hydroxymethyl group from 5,10-methylenetetrahydrofolate is transferred onto alpha-ketoisovalerate to form ketopantoate. In Clostridium botulinum (strain Alaska E43 / Type E3), this protein is 3-methyl-2-oxobutanoate hydroxymethyltransferase.